A 217-amino-acid chain; its full sequence is Ribosomal large subunit pseudouridine synthase E (217 aa).

Residues 19–28 show a composition bias toward polar residues; that stretch reads HQVKRFSSQR. Positions 19–38 are disordered; sequence HQVKRFSSQRSTRRKPENQP. Asp-79 (nucleophile) is an active-site residue.

This sequence belongs to the pseudouridine synthase RsuA family.

It carries out the reaction uridine(2457) in 23S rRNA = pseudouridine(2457) in 23S rRNA. Its function is as follows. Responsible for synthesis of pseudouridine from uracil-2457 in 23S ribosomal RNA. This is Ribosomal large subunit pseudouridine synthase E (rluE) from Escherichia coli O157:H7.